Consider the following 281-residue polypeptide: Lectin (281 aa).

A signal peptide spans 1 to 26 (MATYKLCSVLALSLTLFLLILNKVNS). N-linked (GlcNAc...) asparagine glycans are attached at residues asparagine 43 and asparagine 139. Positions 269-281 (AVIPTSNHNTFAI) are excised as a propeptide.

The protein belongs to the leguminous lectin family. Homodimer. A minor C-terminal proteolytic processing site is observed at position 268.

Its function is as follows. Galactose and N-acetyllactosamine specific lectin. Binds to the H-2 blood type determinant fucosyl-N-acetyllactosamine. The protein is Lectin of Erythrina corallodendron (Coral tree).